The primary structure comprises 410 residues: Acetate kinase (410 aa).

A Mg(2+)-binding site is contributed by asparagine 7. Lysine 14 contributes to the ATP binding site. Arginine 88 is a binding site for substrate. Aspartate 145 acts as the Proton donor/acceptor in catalysis. ATP contacts are provided by residues 203–207 (HAGNG), 278–280 (DTR), and 326–330 (GIGEN). Glutamate 379 contacts Mg(2+).

This sequence belongs to the acetokinase family. As to quaternary structure, homodimer. The cofactor is Mg(2+). It depends on Mn(2+) as a cofactor.

The protein resides in the cytoplasm. It carries out the reaction acetate + ATP = acetyl phosphate + ADP. It functions in the pathway metabolic intermediate biosynthesis; acetyl-CoA biosynthesis; acetyl-CoA from acetate: step 1/2. Catalyzes the formation of acetyl phosphate from acetate and ATP. Can also catalyze the reverse reaction. The polypeptide is Acetate kinase (Chlorante-Aster yellows phytoplasma).